A 338-amino-acid polypeptide reads, in one-letter code: Lipoate-protein ligase A (338 aa).

Positions 29–216 constitute a BPL/LPL catalytic domain; the sequence is PATQRVLFLW…AFFAHYGERI (188 aa). ATP is bound by residues arginine 71, 76–79, and lysine 134; that span reads GAVF. Lysine 134 contacts (R)-lipoate.

This sequence belongs to the LplA family. In terms of assembly, monomer.

The protein localises to the cytoplasm. It carries out the reaction L-lysyl-[lipoyl-carrier protein] + (R)-lipoate + ATP = N(6)-[(R)-lipoyl]-L-lysyl-[lipoyl-carrier protein] + AMP + diphosphate + H(+). It participates in protein modification; protein lipoylation via exogenous pathway; protein N(6)-(lipoyl)lysine from lipoate: step 1/2. Its pathway is protein modification; protein lipoylation via exogenous pathway; protein N(6)-(lipoyl)lysine from lipoate: step 2/2. Its function is as follows. Catalyzes both the ATP-dependent activation of exogenously supplied lipoate to lipoyl-AMP and the transfer of the activated lipoyl onto the lipoyl domains of lipoate-dependent enzymes. The polypeptide is Lipoate-protein ligase A (Salmonella typhi).